Reading from the N-terminus, the 218-residue chain is Type II restriction enzyme KpnI (218 aa).

It catalyses the reaction Endonucleolytic cleavage of DNA to give specific double-stranded fragments with terminal 5'-phosphates.. A P subtype restriction enzyme that recognizes the double-stranded sequence 5'-GGTACC-3' and cleaves after C-5. This Klebsiella pneumoniae protein is Type II restriction enzyme KpnI.